Here is a 277-residue protein sequence, read N- to C-terminus: Probable diphthine methyl ester synthase (277 aa).

S-adenosyl-L-methionine-binding positions include L9, D89, G92, 117 to 118 (SV), L168, L227, and H252.

Belongs to the diphthine synthase family.

It carries out the reaction 2-[(3S)-amino-3-carboxypropyl]-L-histidyl-[translation elongation factor 2] + 4 S-adenosyl-L-methionine = diphthine methyl ester-[translation elongation factor 2] + 4 S-adenosyl-L-homocysteine + 3 H(+). Its pathway is protein modification; peptidyl-diphthamide biosynthesis. Functionally, S-adenosyl-L-methionine-dependent methyltransferase that catalyzes four methylations of the modified target histidine residue in translation elongation factor 2 (EF-2), to form an intermediate called diphthine methyl ester. The four successive methylation reactions represent the second step of diphthamide biosynthesis. The chain is Probable diphthine methyl ester synthase from Arabidopsis thaliana (Mouse-ear cress).